Here is a 360-residue protein sequence, read N- to C-terminus: 45 kDa calcium-binding protein (360 aa).

Residues 1–29 (MVSKQAFLFSLGSLYLSLLFVFLLMDVYA) form the signal peptide. A glycan (N-linked (GlcNAc...) asparagine) is linked at Asn33. EF-hand domains are found at residues 96–131 (RNRR…KTEE), 135–170 (EAVN…SKGF), 231–266 (MLKF…TVEN), 276–311 (WVRD…MNEY), and 312–347 (NALN…FTGS). Positions 109, 111, 113, 115, 120, 148, 150, 152, 154, 159, 244, 246, 248, 250, 255, 289, 291, 293, 300, 325, 327, 329, 331, and 336 each coordinate Ca(2+).

This sequence belongs to the CREC family.

The protein resides in the golgi apparatus lumen. May regulate calcium-dependent activities in the endoplasmic reticulum lumen or post-ER compartment. The polypeptide is 45 kDa calcium-binding protein (sdf4) (Xenopus tropicalis (Western clawed frog)).